Reading from the N-terminus, the 141-residue chain is Large ribosomal subunit protein uL11 (141 aa).

It belongs to the universal ribosomal protein uL11 family. In terms of assembly, part of the ribosomal stalk of the 50S ribosomal subunit. Interacts with L10 and the large rRNA to form the base of the stalk. L10 forms an elongated spine to which L12 dimers bind in a sequential fashion forming a multimeric L10(L12)X complex. One or more lysine residues are methylated.

Forms part of the ribosomal stalk which helps the ribosome interact with GTP-bound translation factors. This is Large ribosomal subunit protein uL11 from Chlorobaculum parvum (strain DSM 263 / NCIMB 8327) (Chlorobium vibrioforme subsp. thiosulfatophilum).